Reading from the N-terminus, the 198-residue chain is Ribosome maturation factor RimP (198 aa).

This sequence belongs to the RimP family.

Its subcellular location is the cytoplasm. Required for maturation of 30S ribosomal subunits. The protein is Ribosome maturation factor RimP of Agrobacterium fabrum (strain C58 / ATCC 33970) (Agrobacterium tumefaciens (strain C58)).